A 566-amino-acid polypeptide reads, in one-letter code: Mediator of RNA polymerase II transcription subunit 1 (566 aa).

The residue at position 155 (Ser155) is a Phosphoserine. Residues 361–425 (TPSSNSNSSE…TNKSKRPSIT (65 aa)) are disordered. The segment covering 410–421 (RRRRSSTNKSKR) has biased composition (basic residues). Residue Ser423 is modified to Phosphoserine.

It belongs to the Mediator complex subunit 1 family. Component of the Mediator complex, which is composed of at least 21 subunits that form three structurally distinct submodules. The Mediator head module contains MED6, MED8, MED11, SRB4/MED17, SRB5/MED18, ROX3/MED19, SRB2/MED20 and SRB6/MED22, the middle module contains MED1, MED4, NUT1/MED5, MED7, CSE2/MED9, NUT2/MED10, SRB7/MED21 and SOH1/MED31, and the tail module contains MED2, PGD1/MED3, RGR1/MED14, GAL11/MED15 and SIN4/MED16. The head and the middle modules interact directly with RNA polymerase II, whereas the elongated tail module interacts with gene-specific regulatory proteins. MED1 interacts directly with MED4 and MED7.

It is found in the nucleus. Component of the Mediator complex, a coactivator involved in the regulated transcription of nearly all RNA polymerase II-dependent genes. Mediator functions as a bridge to convey information from gene-specific regulatory proteins to the basal RNA polymerase II transcription machinery. The Mediator complex, having a compact conformation in its free form, is recruited to promoters by direct interactions with regulatory proteins and serves for the assembly of a functional preinitiation complex with RNA polymerase II and the general transcription factors. The Mediator complex unfolds to an extended conformation and partially surrounds RNA polymerase II, specifically interacting with the unphosphorylated form of the C-terminal domain (CTD) of RNA polymerase II. The Mediator complex dissociates from the RNA polymerase II holoenzyme and stays at the promoter when transcriptional elongation begins. In Saccharomyces cerevisiae (strain ATCC 204508 / S288c) (Baker's yeast), this protein is Mediator of RNA polymerase II transcription subunit 1 (MED1).